A 274-amino-acid polypeptide reads, in one-letter code: 2,3,4,5-tetrahydropyridine-2,6-dicarboxylate N-succinyltransferase (274 aa).

Residues R103 and D140 each coordinate substrate.

The protein belongs to the transferase hexapeptide repeat family. In terms of assembly, homotrimer.

It localises to the cytoplasm. The enzyme catalyses (S)-2,3,4,5-tetrahydrodipicolinate + succinyl-CoA + H2O = (S)-2-succinylamino-6-oxoheptanedioate + CoA. Its pathway is amino-acid biosynthesis; L-lysine biosynthesis via DAP pathway; LL-2,6-diaminopimelate from (S)-tetrahydrodipicolinate (succinylase route): step 1/3. This Haemophilus ducreyi (strain 35000HP / ATCC 700724) protein is 2,3,4,5-tetrahydropyridine-2,6-dicarboxylate N-succinyltransferase.